The following is a 459-amino-acid chain: tRNA modification GTPase MnmE (459 aa).

Positions 22, 85, and 124 each coordinate (6S)-5-formyl-5,6,7,8-tetrahydrofolate. A TrmE-type G domain is found at glycine 221–phenylalanine 380. Asparagine 231 contacts K(+). GTP-binding positions include asparagine 231 to serine 236, threonine 250 to threonine 256, and aspartate 275 to glycine 278. Serine 235 serves as a coordination point for Mg(2+). K(+) is bound by residues threonine 250, valine 252, and threonine 255. Threonine 256 serves as a coordination point for Mg(2+). Lysine 459 serves as a coordination point for (6S)-5-formyl-5,6,7,8-tetrahydrofolate.

The protein belongs to the TRAFAC class TrmE-Era-EngA-EngB-Septin-like GTPase superfamily. TrmE GTPase family. Homodimer. Heterotetramer of two MnmE and two MnmG subunits. K(+) serves as cofactor.

It localises to the cytoplasm. In terms of biological role, exhibits a very high intrinsic GTPase hydrolysis rate. Involved in the addition of a carboxymethylaminomethyl (cmnm) group at the wobble position (U34) of certain tRNAs, forming tRNA-cmnm(5)s(2)U34. This Staphylococcus aureus (strain bovine RF122 / ET3-1) protein is tRNA modification GTPase MnmE.